A 358-amino-acid polypeptide reads, in one-letter code: Peptide chain release factor 1 (358 aa).

N5-methylglutamine is present on Gln-235.

This sequence belongs to the prokaryotic/mitochondrial release factor family. Post-translationally, methylated by PrmC. Methylation increases the termination efficiency of RF1.

It localises to the cytoplasm. In terms of biological role, peptide chain release factor 1 directs the termination of translation in response to the peptide chain termination codons UAG and UAA. This Brachyspira hyodysenteriae (strain ATCC 49526 / WA1) protein is Peptide chain release factor 1.